The primary structure comprises 287 residues: Syntaxin-11 (287 aa).

Positions L41–R71 form a coiled coil. The t-SNARE coiled-coil homology domain maps to L204–A266.

The protein belongs to the syntaxin family. As to quaternary structure, interacts with the SNARE proteins SNAP-23 and VAMP.

Its subcellular location is the membrane. It is found in the golgi apparatus. It localises to the trans-Golgi network membrane. Its function is as follows. SNARE that acts to regulate protein transport between late endosomes and the trans-Golgi network. In Homo sapiens (Human), this protein is Syntaxin-11 (STX11).